A 260-amino-acid chain; its full sequence is Small ribosomal subunit protein uS2 (260 aa).

The protein belongs to the universal ribosomal protein uS2 family.

The protein is Small ribosomal subunit protein uS2 of Streptococcus gordonii (strain Challis / ATCC 35105 / BCRC 15272 / CH1 / DL1 / V288).